The following is a 147-amino-acid chain: Large ribosomal subunit protein uL13 (147 aa).

Belongs to the universal ribosomal protein uL13 family. Part of the 50S ribosomal subunit.

Its function is as follows. This protein is one of the early assembly proteins of the 50S ribosomal subunit, although it is not seen to bind rRNA by itself. It is important during the early stages of 50S assembly. The polypeptide is Large ribosomal subunit protein uL13 (Rhodococcus jostii (strain RHA1)).